A 374-amino-acid chain; its full sequence is DNA/RNA-binding protein ALBA4 (374 aa).

This sequence belongs to the histone-like Alba family.

Its subcellular location is the cytoplasm. The protein localises to the cell cortex. It localises to the perinuclear region. Possesses DNA- and RNA-binding activities. Binds to DNA with relaxed sequence specificity. May associate with the subtelomeric TARE6 repeats. Regulates the abundance of transcript sub-populations in a stage-specific manner. Regulates activation of male gametocytes. Participates in the coordination of sporozoite development in the oocyst. The chain is DNA/RNA-binding protein ALBA4 from Plasmodium yoelii yoelii.